We begin with the raw amino-acid sequence, 32 residues long: U13-ctenitoxin-Pn1a (32 aa).

Disulfide bonds link Cys3-Cys17, Cys10-Cys21, and Cys16-Cys30.

As to expression, expressed by the venom gland.

It is found in the secreted. Its function is as follows. Acts as a neurotoxin. The sequence is that of U13-ctenitoxin-Pn1a from Phoneutria nigriventer (Brazilian armed spider).